The chain runs to 518 residues: Arrestin-related trafficking adapter 10 (518 aa).

Lysine 118 participates in a covalent cross-link: Glycyl lysine isopeptide (Lys-Gly) (interchain with G-Cter in ubiquitin).

Belongs to the ART10 family. As to quaternary structure, interacts with RSP5. In terms of processing, ubiquitinated by RSP5.

It is found in the cytoplasm. In terms of biological role, may regulate endocytosis by recruiting RSP5 ubiquitin ligase activity to specific plasma membrane proteins in response to extracellular stimuli. This Saccharomyces cerevisiae (strain YJM789) (Baker's yeast) protein is Arrestin-related trafficking adapter 10 (ART10).